The following is a 1132-amino-acid chain: Mis18-binding protein 1 (1132 aa).

Lysine 7 is covalently cross-linked (Glycyl lysine isopeptide (Lys-Gly) (interchain with G-Cter in SUMO2)). Serine 9 is modified (phosphoserine). Lysine 65 is covalently cross-linked (Glycyl lysine isopeptide (Lys-Gly) (interchain with G-Cter in SUMO2)). A phosphoserine mark is found at serine 110, serine 131, serine 135, serine 172, and serine 192. Positions 123 to 154 (LRDKQEQPSRNSSLLEPQKSGNNETFTPNRVE) are disordered. A compositionally biased stretch (polar residues) spans 130-150 (PSRNSSLLEPQKSGNNETFTP). Residues lysine 211 and lysine 262 each participate in a glycyl lysine isopeptide (Lys-Gly) (interchain with G-Cter in SUMO2) cross-link. Serine 299 is subject to Phosphoserine. Residues 306-332 (SERTTEGTSQQKVKEGNGKTVPGETGL) form a disordered region. Serine 365 carries the phosphoserine modification. The region spanning 383–469 (VQLQEWMIKS…MFGFPENWKE (87 aa)) is the SANTA domain. A disordered region spans residues 482-518 (EKNREKTKQKQKTGRSVRDIRKSMKNDARENQTDTAQ). Positions 497–513 (SVRDIRKSMKNDARENQ) are enriched in basic and acidic residues. Residues lysine 534, lysine 612, lysine 639, and lysine 647 each participate in a glycyl lysine isopeptide (Lys-Gly) (interchain with G-Cter in SUMO2) cross-link. Threonine 653 carries the post-translational modification Phosphothreonine. Glycyl lysine isopeptide (Lys-Gly) (interchain with G-Cter in SUMO2) cross-links involve residues lysine 727 and lysine 742. The tract at residues 765 to 798 (HQSSPDLSSEESETEKEIKRKAEVKKTKAGNTKE) is disordered. Serine 772 and serine 773 each carry phosphoserine. Positions 779-790 (EKEIKRKAEVKK) are enriched in basic and acidic residues. The residue at position 821 (threonine 821) is a Phosphothreonine. Serine 824 bears the Phosphoserine mark. Lysine 840 is covalently cross-linked (Glycyl lysine isopeptide (Lys-Gly) (interchain with G-Cter in SUMO2)). Residue serine 860 is modified to Phosphoserine. The SANT domain maps to 875-930 (IQDKEWNEKELQKLHCAFASLPKHKPGFWSEVAAAVGSRSPEECQRKYMENPRGKG). Residue lysine 899 forms a Glycyl lysine isopeptide (Lys-Gly) (interchain with G-Cter in SUMO2) linkage. The tract at residues 923-957 (MENPRGKGSQKHVTKKKPANSKGQNGKRGDADQKQ) is disordered. Basic residues predominate over residues 930-941 (GSQKHVTKKKPA). Glycyl lysine isopeptide (Lys-Gly) (interchain with G-Cter in SUMO2) cross-links involve residues lysine 956, lysine 964, and lysine 983. A Phosphoserine modification is found at serine 1008. A Glycyl lysine isopeptide (Lys-Gly) (interchain with G-Cter in SUMO2) cross-link involves residue lysine 1079. Position 1086 is a phosphoserine (serine 1086). 2 positions are modified to phosphothreonine: threonine 1087 and threonine 1089. 2 positions are modified to phosphoserine: serine 1104 and serine 1116.

Interacts with SP1. Interacts with MIS18A. Identified in a complex containing MIS18A, OIP5/MIS18B, MIS18BP1, RBBP7 and RBBP4. Interacts with KAT7/HBO1. Interacts (via N-terminus) with FLNA (via N-terminus).

Its subcellular location is the nucleus. It localises to the chromosome. It is found in the centromere. Required for recruitment of CENPA to centromeres and normal chromosome segregation during mitosis. In Homo sapiens (Human), this protein is Mis18-binding protein 1 (MIS18BP1).